Consider the following 1185-residue polypeptide: Ubiquitin carboxyl-terminal hydrolase 36 (1185 aa).

A compositionally biased stretch (polar residues) spans 126 to 169 (TGKALSSNGHDNTNGVNGSSAATVNGNRKQTVEQSNQNSTTNPN). The segment at 126 to 174 (TGKALSSNGHDNTNGVNGSSAATVNGNRKQTVEQSNQNSTTNPNELPKP) is disordered. The USP domain maps to 199–509 (AGMLNVGNTC…NAYIMFYELD (311 aa)). The active-site Nucleophile is Cys208. The active-site Proton acceptor is His468. A phosphoserine mark is found at Ser552 and Ser554. A compositionally biased stretch (low complexity) spans 642-658 (ANSNKSSCNNNTLTTNS). 4 disordered regions span residues 642–804 (ANSN…TDAI), 818–975 (HRAT…YQSE), 1056–1122 (APTL…GSFP), and 1136–1185 (NKFK…QQQS). Residues 670 to 683 (SDEEDEDEDSDDDV) show a composition bias toward acidic residues. At Thr716 the chain carries Phosphothreonine. Phosphoserine is present on residues Ser726 and Ser728. Low complexity-rich tracts occupy residues 778-797 (KSNG…SNNN) and 836-853 (QQQQ…SLIS). Ser867 bears the Phosphoserine mark. Phosphothreonine is present on Thr870. Ser873 is modified (phosphoserine). Positions 891–920 (DDNDDDDEDADEEDDADADAEQEEYDDEVV) are enriched in acidic residues. Composition is skewed to polar residues over residues 924–942 (TTPS…SKPS) and 959–975 (SAKS…YQSE). Thr925 is modified (phosphothreonine). Positions 1062-1071 (EAREQRKRDA) are enriched in basic and acidic residues. 2 stretches are compositionally biased toward low complexity: residues 1151 to 1161 (QQQRALQRHLA) and 1172 to 1185 (QSTG…QQQS).

It belongs to the peptidase C19 family. Interacts with atms/PAF1, but not with CycT.

It is found in the nucleus. The protein resides in the nucleolus. It carries out the reaction Thiol-dependent hydrolysis of ester, thioester, amide, peptide and isopeptide bonds formed by the C-terminal Gly of ubiquitin (a 76-residue protein attached to proteins as an intracellular targeting signal).. Functionally, required for maintaining multiple types of adult stem cells, including male and female germline, epithelial follicle cell and intestinal stem cells. May function as a transcriptional repressor by continually deubiquiting histone H2B at the promoters of genes critical for cellular differentiation, thereby preventing histone H3 'Lys-4' trimethylation (H3K4). Controls selective autophagy activation by ubiquitinated proteins. This is Ubiquitin carboxyl-terminal hydrolase 36 (Usp36) from Drosophila mojavensis (Fruit fly).